Here is a 352-residue protein sequence, read N- to C-terminus: MLTERQLMILKEIIRLFTESGQPVGSKKLMSELPMHVSSATIRNDMADLENVGLIEKTHSSSGRVPSMKGYRYYLDHLIQPAVLNPMDVATVQQSFGRHYHKIDEIVSQSANILSNLTSYTAITLGPEMAEIRLTGFRLVPLGNHQVMAIIVTSAGTVDNQVFTIPNAISGDELEKAIRVVNDHLIGLPLTVVSQKLKTEVPALLMQYMGSPGGFLNIFDDVLKQASQERLYVGGQSNLLNFSELTDVSQLKSIYNIINQSDDLAKLLELSPGEANSQVQVRLGDEMTNDLLKNYSLMTVNYDVGEHGQGLIALLGPTSMPHSRMIGLLDLFREELAKKLIDYYADFDDNQS.

It belongs to the HrcA family.

Negative regulator of class I heat shock genes (grpE-dnaK-dnaJ and groELS operons). Prevents heat-shock induction of these operons. In Latilactobacillus sakei (Lactobacillus sakei), this protein is Heat-inducible transcription repressor HrcA.